A 480-amino-acid chain; its full sequence is Argininosuccinate lyase (480 aa).

A disordered region spans residues 1–20; it reads MTQQDGGQAGQAEPTKLWGG.

It belongs to the lyase 1 family. Argininosuccinate lyase subfamily.

The protein localises to the cytoplasm. The catalysed reaction is 2-(N(omega)-L-arginino)succinate = fumarate + L-arginine. The protein operates within amino-acid biosynthesis; L-arginine biosynthesis; L-arginine from L-ornithine and carbamoyl phosphate: step 3/3. The polypeptide is Argininosuccinate lyase (Saccharopolyspora erythraea (strain ATCC 11635 / DSM 40517 / JCM 4748 / NBRC 13426 / NCIMB 8594 / NRRL 2338)).